Reading from the N-terminus, the 370-residue chain is Ubiquitin carboxyl-terminal hydrolase 12 (370 aa).

Positions 1-4 match the Required for plasma membrane localization of USP12/WDR20 motif; the sequence is MEIL. Residues 39 to 369 form the USP domain; the sequence is FGLVNFGNTC…SGYILFYQSR (331 aa). The active-site Nucleophile is the C48. The segment covering 146–157 has biased composition (basic and acidic residues); it reads QEKQNGRLRNGD. Positions 146-168 are disordered; the sequence is QEKQNGRLRNGDVDNEDNNSTPD. C186, C189, C233, and C236 together coordinate Zn(2+). The active-site Proton acceptor is H317.

Belongs to the peptidase C19 family. USP12/USP46 subfamily. As to quaternary structure, interacts with WDR48. Interacts with WDR20; this interaction promotes translocation of the USP12 complex to the plasma membrane. Component of the USP12/WDR20/WDR48 deubiquitinating complex. Component of the USP12/DMWD/WDR48 deubiquitinating complex. Interacts with PHLPP1. Interacts with RBPJ. Interacts with CBP; this interaction blocks the acetyltransferase activity of CREBBP.

The protein resides in the nucleus. The protein localises to the cytoplasm. It localises to the cell membrane. The catalysed reaction is Thiol-dependent hydrolysis of ester, thioester, amide, peptide and isopeptide bonds formed by the C-terminal Gly of ubiquitin (a 76-residue protein attached to proteins as an intracellular targeting signal).. Activated by interaction with WDR20; WDR48 and DMWD through different allosteric mechanisms. Functionally, deubiquitinating enzyme that plays various roles in the regulation of the immune response and inflammation. During TCR engagement and activation, translocates into the cytoplasm and deubiquitinates its substrates LAT and TRAT1 and prevents their lysosome-dependent degradation to stabilize the TCR signaling complex at the plasma membrane. Plays an essential role in the selective LPS-induced macrophage response through the activation of NF-kappa-B pathway. In addition, promotes that antiviral immune response through targeting DNA sensor IFI16 to inhibit its proteasome-dependent degradation. Participates in the interferon signaling pathway and antiviral response independently of its deubiquitinase activity by maintaining nuclear phosphorylated STAT1 levels via inhibition of its CREBBP-mediated acetylation and subsequent dephosphorylation. Plays an intrinsic role in promoting the differentiation, activation and proliferation of CD4(+) T-cell by activating the NF-kappa-B signaling pathway through deubiquitinating and stabilizing B-cell lymphoma/leukemia 10/BCL10. In myeloid-derived suppressor cells promotes the activation of the NF-kappa-B via deubiquitination and stabilization of RELA. Regulates the 'Lys-63'-linked polyubiquitin chains of BAX and thereby modulates the mitochondrial apoptotic process. Negative regulator of NOTCH signaling that specifically deubiquitinates non-activated NOTCH receptors to target them for lysosomal degradation; deubiquitination of NOTCH stimulates its transport form late endosomes to lysosomes. Protects neurons against HTT/huntingtin-induced polyglutamine expansion-dependent neurodegeneration through regulation of autophagic flux. This function is independent of deubiquitinase activity or of other components of the USP12-WDR20-WDR48 deubiquitinating complex. In complex with WDR48, acts as a potential tumor suppressor by positively regulating PHLPP1 stability. The protein is Ubiquitin carboxyl-terminal hydrolase 12 (Usp12) of Mus musculus (Mouse).